The sequence spans 270 residues: MGGQVRVAIVGAGGRMGRTLIEAAYHQEHILLGAAIERAGSSLVGVDAGELAGVGKLNVIIMDSLDYATDDFDVLIDFTAPDASIVHLDWCVRHKKAMVIGTTGFNQAQKIQINAFAEQTPVVMAPNMSVGVNLMWKLLELAAEVMGDYTDIEIIEGHHRHKKDAPSGTALKMGEVIAKTLGRDLEKCAVYGREGITGERDRETIGFATIRAGDLVGEHTAMFADIGERLEITHKASSRMTFANGAMRAARWVVEQKPGLYDMQQVLGLN.

NAD(+) is bound by residues 11-16 (GAGGRM) and E37. R38 is an NADP(+) binding site. NAD(+)-binding positions include 101–103 (GTT) and 125–128 (APNM). H158 acts as the Proton donor/acceptor in catalysis. H159 is a binding site for (S)-2,3,4,5-tetrahydrodipicolinate. The active-site Proton donor is the K162. Position 168 to 169 (168 to 169 (GT)) interacts with (S)-2,3,4,5-tetrahydrodipicolinate.

Belongs to the DapB family.

It is found in the cytoplasm. It carries out the reaction (S)-2,3,4,5-tetrahydrodipicolinate + NAD(+) + H2O = (2S,4S)-4-hydroxy-2,3,4,5-tetrahydrodipicolinate + NADH + H(+). The catalysed reaction is (S)-2,3,4,5-tetrahydrodipicolinate + NADP(+) + H2O = (2S,4S)-4-hydroxy-2,3,4,5-tetrahydrodipicolinate + NADPH + H(+). The protein operates within amino-acid biosynthesis; L-lysine biosynthesis via DAP pathway; (S)-tetrahydrodipicolinate from L-aspartate: step 4/4. Functionally, catalyzes the conversion of 4-hydroxy-tetrahydrodipicolinate (HTPA) to tetrahydrodipicolinate. This Shewanella putrefaciens (strain CN-32 / ATCC BAA-453) protein is 4-hydroxy-tetrahydrodipicolinate reductase.